The following is a 325-amino-acid chain: Ribose-phosphate pyrophosphokinase (325 aa).

ATP is bound by residues 45–47 and 104–105; these read NGE and RQ. Mg(2+)-binding residues include His138 and Asp178. Residue Lys202 is part of the active site. D-ribose 5-phosphate is bound by residues Arg204, Asp230, and 234–238; that span reads DTGGT.

It belongs to the ribose-phosphate pyrophosphokinase family. Class I subfamily. As to quaternary structure, homohexamer. Mg(2+) is required as a cofactor.

The protein localises to the cytoplasm. The catalysed reaction is D-ribose 5-phosphate + ATP = 5-phospho-alpha-D-ribose 1-diphosphate + AMP + H(+). It participates in metabolic intermediate biosynthesis; 5-phospho-alpha-D-ribose 1-diphosphate biosynthesis; 5-phospho-alpha-D-ribose 1-diphosphate from D-ribose 5-phosphate (route I): step 1/1. Its function is as follows. Involved in the biosynthesis of the central metabolite phospho-alpha-D-ribosyl-1-pyrophosphate (PRPP) via the transfer of pyrophosphoryl group from ATP to 1-hydroxyl of ribose-5-phosphate (Rib-5-P). The sequence is that of Ribose-phosphate pyrophosphokinase from Corynebacterium efficiens (strain DSM 44549 / YS-314 / AJ 12310 / JCM 11189 / NBRC 100395).